The following is a 271-amino-acid chain: NADPH-dependent 7-cyano-7-deazaguanine reductase (271 aa).

81-83 (IES) provides a ligand contact to substrate. 83–84 (SK) serves as a coordination point for NADPH. C177 (thioimide intermediate) is an active-site residue. Residue D184 is the Proton donor of the active site. 216–217 (HE) provides a ligand contact to substrate. 245-246 (RG) lines the NADPH pocket.

The protein belongs to the GTP cyclohydrolase I family. QueF type 2 subfamily. Homodimer.

The protein localises to the cytoplasm. It catalyses the reaction 7-aminomethyl-7-carbaguanine + 2 NADP(+) = 7-cyano-7-deazaguanine + 2 NADPH + 3 H(+). It participates in tRNA modification; tRNA-queuosine biosynthesis. Functionally, catalyzes the NADPH-dependent reduction of 7-cyano-7-deazaguanine (preQ0) to 7-aminomethyl-7-deazaguanine (preQ1). This Xanthomonas oryzae pv. oryzae (strain MAFF 311018) protein is NADPH-dependent 7-cyano-7-deazaguanine reductase.